We begin with the raw amino-acid sequence, 161 residues long: Peptidyl-prolyl cis-trans isomerase-like 3 (161 aa).

The PPIase cyclophilin-type domain occupies 1–154; it reads MAVTLHTDVG…NDVHIKDITI (154 aa).

This sequence belongs to the cyclophilin-type PPIase family. PPIL3 subfamily.

The catalysed reaction is [protein]-peptidylproline (omega=180) = [protein]-peptidylproline (omega=0). PPIases accelerate the folding of proteins. It catalyzes the cis-trans isomerization of proline imidic peptide bonds in oligopeptides. The sequence is that of Peptidyl-prolyl cis-trans isomerase-like 3 (PPIL3) from Gallus gallus (Chicken).